We begin with the raw amino-acid sequence, 402 residues long: MFIPEKIGTPLSPNATKVMILGSGELGKEVTIAFQRLGVEVHAVDRYDNAPAHQVAHFSYVIDMTDAAAVRELVTTIKPDFIIPEIEALATDELVRIEQEGLATVVPTARATQLTMNREGIRRLASEELGLPTSGYEFCSTFEEFTAAAERLGYPNVVKPVMSSSGKGQSVVTSAEDLESAWEYAMSGARVSNQRVIVEQFVEFDYEITLLTVRGIDPATGKPATWFCEPIGHRQQDGDYVESWQPMEMTAPALENARSVAARITNALGGRGVFGVELFVSGDDVYFSEVSPRPHDTGLVTLATQRFSEFELHAKAVLGLPVDVTLTSPGASAVIYGGVDSPGVSYAGLAEALAVAETDVRLFGKPEAFTKRRMGVAVSTAEDTATARDRATLAAAAVTVHG.

N(1)-(5-phospho-beta-D-ribosyl)glycinamide-binding positions include 25 to 26 (EL) and E85. Residues R118, K159, 164–169 (SSGKGQ), 199–202 (EQFV), and E207 each bind ATP. Residues 123-318 (RLASEELGLP…EFELHAKAVL (196 aa)) enclose the ATP-grasp domain. Positions 277 and 289 each coordinate Mg(2+). N(1)-(5-phospho-beta-D-ribosyl)glycinamide is bound by residues D296, K365, and 372-373 (RR).

This sequence belongs to the PurK/PurT family. As to quaternary structure, homodimer.

It carries out the reaction N(1)-(5-phospho-beta-D-ribosyl)glycinamide + formate + ATP = N(2)-formyl-N(1)-(5-phospho-beta-D-ribosyl)glycinamide + ADP + phosphate + H(+). Its pathway is purine metabolism; IMP biosynthesis via de novo pathway; N(2)-formyl-N(1)-(5-phospho-D-ribosyl)glycinamide from N(1)-(5-phospho-D-ribosyl)glycinamide (formate route): step 1/1. Involved in the de novo purine biosynthesis. Catalyzes the transfer of formate to 5-phospho-ribosyl-glycinamide (GAR), producing 5-phospho-ribosyl-N-formylglycinamide (FGAR). Formate is provided by PurU via hydrolysis of 10-formyl-tetrahydrofolate. This is Formate-dependent phosphoribosylglycinamide formyltransferase from Corynebacterium efficiens (strain DSM 44549 / YS-314 / AJ 12310 / JCM 11189 / NBRC 100395).